Consider the following 636-residue polypeptide: MAARPLSRMLRRLLRSSARSCSSGAPVTQPCPGESARAASEEVSRRRQFLREHAAPFSAFLTDSFGRQHSYLRISLTEKCNLRCQYCMPEEGVPLTPKANLLTTEEILTLARLFVKEGIDKIRLTGGEPLIRPDVVDIVAQLQRLEGLRTIGVTTNGINLARLLPQLQKAGLSAINISLDTLVPAKFEFIVRRKGFHKVMEGIHKAIELGYNPVKVNCVVMRGLNEDELLDFAALTEGLPLDVRFIEYMPFDGNKWNFKKMVSYKEMLDTVRQQWPELEKVPEEESSTAKAFKIPGFQGQISFITSMSEHFCGTCNRLRITADGNLKVCLFGNSEVSLRDHLRAGASEQELLRIIGAAVGRKKRQHAGMFSISQMKNRPMILIELFLMFPNSPPANPSIFSWDPLHVQGLRPRMSFSSQVATLWKGCRVPQTPPLAQQRLGSGSFQRHYTSRADSDANSKCLSPGSWASAAPSGPQLTSEQLTHVDSEGRAAMVDVGRKPDTERVAVASAVVLLGPVAFKLVQQNQLKKGDALVVAQLAGVQAAKVTSQLIPLCHHVALSHIQVQLELDSTRHAVKIQASCRARGPTGVEMEALTSAAVAALTLYDMCKAVSRDIVLEEIKLISKTGGQRGDFHRA.

The interval Met1–Ile383 is molybdenum cofactor biosynthesis protein A. Ser64 is subject to Phosphoserine. A Radical SAM core domain is found at Ser64–Glu277. Residue Arg73 coordinates GTP. [4Fe-4S] cluster contacts are provided by Cys80 and Cys84. Tyr86 is an S-adenosyl-L-methionine binding site. A [4Fe-4S] cluster-binding site is contributed by Cys87. GTP is bound at residue Arg123. An S-adenosyl-L-methionine-binding site is contributed by Gly127. Thr154 is a GTP binding site. Ser178 contacts S-adenosyl-L-methionine. An N6-acetyllysine modification is found at Lys198. Position 215 (Lys215) interacts with GTP. Met249 provides a ligand contact to S-adenosyl-L-methionine. [4Fe-4S] cluster is bound by residues Cys312 and Cys315. Arg317–Arg319 is a binding site for GTP. Residue Cys329 participates in [4Fe-4S] cluster binding. The segment at Met414–Ala636 is molybdenum cofactor biosynthesis protein C. A disordered region spans residues Asp456 to Glu480. Residues Ser463–Pro475 show a composition bias toward low complexity. The residue at position 528 (Lys528) is an N6-acetyllysine. The For molybdenum cofactor biosynthesis protein C activity role is filled by Asp606.

In the C-terminal section; belongs to the MoaC family. The protein in the N-terminal section; belongs to the radical SAM superfamily. MoaA family. As to quaternary structure, isoform MOCS1A and isoform MOCS1B probably form a heterooligomer. The cofactor is [4Fe-4S] cluster. In terms of tissue distribution, isoform MOCS1A and isoform 2 are widely expressed.

It carries out the reaction GTP + AH2 + S-adenosyl-L-methionine = (8S)-3',8-cyclo-7,8-dihydroguanosine 5'-triphosphate + 5'-deoxyadenosine + L-methionine + A + H(+). The catalysed reaction is (8S)-3',8-cyclo-7,8-dihydroguanosine 5'-triphosphate = cyclic pyranopterin phosphate + diphosphate. It functions in the pathway cofactor biosynthesis; molybdopterin biosynthesis. Its function is as follows. Isoform MOCS1A and isoform MOCS1B probably form a complex that catalyzes the conversion of 5'-GTP to cyclic pyranopterin monophosphate (cPMP). MOCS1A catalyzes the cyclization of GTP to (8S)-3',8-cyclo-7,8-dihydroguanosine 5'-triphosphate and MOCS1B catalyzes the subsequent conversion of (8S)-3',8-cyclo-7,8-dihydroguanosine 5'-triphosphate to cPMP. The sequence is that of Molybdenum cofactor biosynthesis protein 1 (MOCS1) from Homo sapiens (Human).